Consider the following 144-residue polypeptide: Large ribosomal subunit protein uL13 (144 aa).

It belongs to the universal ribosomal protein uL13 family. As to quaternary structure, part of the 50S ribosomal subunit.

Its function is as follows. This protein is one of the early assembly proteins of the 50S ribosomal subunit, although it is not seen to bind rRNA by itself. It is important during the early stages of 50S assembly. The chain is Large ribosomal subunit protein uL13 from Ruminiclostridium cellulolyticum (strain ATCC 35319 / DSM 5812 / JCM 6584 / H10) (Clostridium cellulolyticum).